Reading from the N-terminus, the 329-residue chain is Malate dehydrogenase (329 aa).

Position 12–18 (12–18 (GAAGQIG)) interacts with NAD(+). Substrate contacts are provided by Arg93 and Arg99. NAD(+) contacts are provided by residues Asn106, Gln113, and 130-132 (VGN). Residues Asn132 and Arg163 each coordinate substrate. His188 serves as the catalytic Proton acceptor.

The protein belongs to the LDH/MDH superfamily. MDH type 2 family.

It catalyses the reaction (S)-malate + NAD(+) = oxaloacetate + NADH + H(+). Its activity is regulated as follows. Strongly inhibited by Hg(2+) and Zn(2+). Activated by Na(+), NH(4)(+), Ca(2+), Cu(2+) and Mg(2+). Its function is as follows. Catalyzes the reversible oxidation of malate to oxaloacetate. Exhibits remarkably higher catalytic efficiency for oxaloacetate reduction than for malate oxidation in vitro. Highly specific for NAD(H). Can also use NADPH for oxaloacetate reduction, but catalytic efficiency is 97-fold higher with NADH. No activity detected with NADP(+) and malate. This Streptomyces avermitilis (strain ATCC 31267 / DSM 46492 / JCM 5070 / NBRC 14893 / NCIMB 12804 / NRRL 8165 / MA-4680) protein is Malate dehydrogenase.